Reading from the N-terminus, the 209-residue chain is Ribonuclease HII (209 aa).

In terms of domain architecture, RNase H type-2 spans 18–209 (SLVAGVDEVG…FKPVKALLER (192 aa)). Positions 24, 25, and 116 each coordinate a divalent metal cation.

This sequence belongs to the RNase HII family. It depends on Mn(2+) as a cofactor. The cofactor is Mg(2+).

It localises to the cytoplasm. It catalyses the reaction Endonucleolytic cleavage to 5'-phosphomonoester.. Its function is as follows. Endonuclease that specifically degrades the RNA of RNA-DNA hybrids. The polypeptide is Ribonuclease HII (Shewanella oneidensis (strain ATCC 700550 / JCM 31522 / CIP 106686 / LMG 19005 / NCIMB 14063 / MR-1)).